The chain runs to 317 residues: Adenine deaminase (317 aa).

Zn(2+) is bound by residues His-14, His-16, and His-194. Residue Glu-197 is the Proton donor of the active site. Residue Asp-275 coordinates Zn(2+). Asp-276 contacts substrate.

Belongs to the metallo-dependent hydrolases superfamily. Adenosine and AMP deaminases family. Adenine deaminase type 2 subfamily. Requires Zn(2+) as cofactor.

The catalysed reaction is adenine + H2O + H(+) = hypoxanthine + NH4(+). Functionally, catalyzes the hydrolytic deamination of adenine to hypoxanthine. Plays an important role in the purine salvage pathway and in nitrogen catabolism. This Pseudomonas fluorescens (strain Pf0-1) protein is Adenine deaminase.